Reading from the N-terminus, the 106-residue chain is ATP-dependent Clp protease adapter protein ClpS (106 aa).

The span at 1–13 (MGNNSTWSQSENL) shows a compositional bias: polar residues. The segment at 1 to 21 (MGNNSTWSQSENLTADKQKEK) is disordered.

This sequence belongs to the ClpS family. As to quaternary structure, binds to the N-terminal domain of the chaperone ClpA.

Involved in the modulation of the specificity of the ClpAP-mediated ATP-dependent protein degradation. The protein is ATP-dependent Clp protease adapter protein ClpS of Pectobacterium carotovorum subsp. carotovorum (strain PC1).